A 487-amino-acid chain; its full sequence is Cysteine--tRNA ligase (487 aa).

Position 29 (cysteine 29) interacts with Zn(2+). Positions 31–41 match the 'HIGH' region motif; that stretch reads VTVYDYNHVGH. Zn(2+) contacts are provided by cysteine 209, histidine 234, and glutamate 238. The 'KMSKS' region motif lies at 266–270; sequence KMSKS. Position 269 (lysine 269) interacts with ATP.

Belongs to the class-I aminoacyl-tRNA synthetase family. Monomer. It depends on Zn(2+) as a cofactor.

The protein localises to the cytoplasm. It carries out the reaction tRNA(Cys) + L-cysteine + ATP = L-cysteinyl-tRNA(Cys) + AMP + diphosphate. In Sulfurihydrogenibium sp. (strain YO3AOP1), this protein is Cysteine--tRNA ligase.